Consider the following 103-residue polypeptide: MYAIIKTGGKQYKVAEGDSVFVEKLDAAEGSEVTFDEVILVANGDDVKVGTPLVDGAKVTAKVEKQGKEKKVVTFKYKPKKHSHSKYGHRQPYTKVTVEKIEA.

This sequence belongs to the bacterial ribosomal protein bL21 family. In terms of assembly, part of the 50S ribosomal subunit. Contacts protein L20.

In terms of biological role, this protein binds to 23S rRNA in the presence of protein L20. This is Large ribosomal subunit protein bL21 from Lactobacillus acidophilus (strain ATCC 700396 / NCK56 / N2 / NCFM).